Consider the following 182-residue polypeptide: Ribosome-recycling factor (182 aa).

Belongs to the RRF family.

Its subcellular location is the cytoplasm. In terms of biological role, responsible for the release of ribosomes from messenger RNA at the termination of protein biosynthesis. May increase the efficiency of translation by recycling ribosomes from one round of translation to another. The sequence is that of Ribosome-recycling factor from Synechocystis sp. (strain ATCC 27184 / PCC 6803 / Kazusa).